Consider the following 261-residue polypeptide: Monensin polyketide synthase putative ketoacyl reductase (261 aa).

10–34 is an NAD(+) binding site; that stretch reads LVTGATSGIGLATARLLAAQGHLVF. Residue Ser144 coordinates substrate. Tyr157 serves as the catalytic Proton acceptor.

It belongs to the short-chain dehydrogenases/reductases (SDR) family.

Its pathway is antifungal biosynthesis; monensin biosynthesis. This Streptomyces virginiae (Streptomyces cinnamonensis) protein is Monensin polyketide synthase putative ketoacyl reductase.